We begin with the raw amino-acid sequence, 598 residues long: IQ calmodulin-binding motif-containing protein 1 (598 aa).

Positions 1-157 are interaction with BBS1, BBS8 and BBS9; that stretch reads MKPAGTDPRI…SLFWLLGGHV (157 aa). The tract at residues 287 to 598 is interaction with CEP290, BBS1, BBS2, BBS4, BBS5, BBS7, BBS8 and BBS9; the sequence is QEVEEQKLHK…MLFIGGTKPP (312 aa). 4 IQ domains span residues 294-317, 318-338, 387-416, and 417-437; these read LHKA…LKKL, PSAV…MMLE, EEKS…SLTE, and YKAA…CRKK. The stretch at 336-362 forms a coiled coil; it reads MLELNRQKEEEDLRLKLQLQRQRAMRL. The segment at 530 to 598 is interaction with BBS1, BBS2, BBS4, BBS7, BBS8 and BBS9; sequence AEGKEPEQFL…MLFIGGTKPP (69 aa).

Interacts with calmodulin. Interacts with CEP290/NPHP6; IQCB1/NPHP5 and CEP290/NPHP6; are proposed to form a functional NPHP5-6 module localized to the centrosome. Interacts with ATXN10. Interacts with NPHP1, INVS, NPHP4 and RPGRIP1L; these interactions likely require additional interactors. Associates with the BBSome complex; interacts with BBS1, BBS2, BBS4, BBS5, BBS7, BBS8 and BBS9. In terms of tissue distribution, localized to the outer segment and connecting cilia of photoreceptor cells.

The protein localises to the cytoplasm. The protein resides in the cytoskeleton. It is found in the microtubule organizing center. Its subcellular location is the centrosome. Functionally, involved in ciliogenesis. The function in an early step in cilia formation depends on its association with CEP290/NPHP6. Involved in regulation of the BBSome complex integrity, specifically for presence of BBS2 and BBS5 in the complex, and in ciliary targeting of selected BBSome cargos. May play a role in controlling entry of the BBSome complex to cilia possibly implicating CEP290/NPHP6. The protein is IQ calmodulin-binding motif-containing protein 1 (Iqcb1) of Mus musculus (Mouse).